The chain runs to 284 residues: Bifunctional protein FolD 1 (284 aa).

NADP(+) contacts are provided by residues 166–168 (GAS) and isoleucine 232.

Belongs to the tetrahydrofolate dehydrogenase/cyclohydrolase family. Homodimer.

It catalyses the reaction (6R)-5,10-methylene-5,6,7,8-tetrahydrofolate + NADP(+) = (6R)-5,10-methenyltetrahydrofolate + NADPH. It carries out the reaction (6R)-5,10-methenyltetrahydrofolate + H2O = (6R)-10-formyltetrahydrofolate + H(+). It participates in one-carbon metabolism; tetrahydrofolate interconversion. Catalyzes the oxidation of 5,10-methylenetetrahydrofolate to 5,10-methenyltetrahydrofolate and then the hydrolysis of 5,10-methenyltetrahydrofolate to 10-formyltetrahydrofolate. The protein is Bifunctional protein FolD 1 of Ectopseudomonas mendocina (strain ymp) (Pseudomonas mendocina).